Reading from the N-terminus, the 96-residue chain is Co-chaperonin GroES (96 aa).

The protein belongs to the GroES chaperonin family. As to quaternary structure, heptamer of 7 subunits arranged in a ring. Interacts with the chaperonin GroEL.

The protein localises to the cytoplasm. Together with the chaperonin GroEL, plays an essential role in assisting protein folding. The GroEL-GroES system forms a nano-cage that allows encapsulation of the non-native substrate proteins and provides a physical environment optimized to promote and accelerate protein folding. GroES binds to the apical surface of the GroEL ring, thereby capping the opening of the GroEL channel. This is Co-chaperonin GroES from Neisseria meningitidis serogroup A / serotype 4A (strain DSM 15465 / Z2491).